We begin with the raw amino-acid sequence, 363 residues long: Inositol-3-phosphate synthase (363 aa).

An Isoglutamyl lysine isopeptide (Lys-Gln) (interchain with Q-Cter in protein Pup) cross-link involves residue K65. NAD(+) contacts are provided by D70, A129, Y149, S192, D227, and K240.

It belongs to the myo-inositol 1-phosphate synthase family. The cofactor is NAD(+). Post-translationally, pupylated at Lys-65 by the prokaryotic ubiquitin-like protein Pup, which leads to its degradation by the proteasome.

The catalysed reaction is D-glucose 6-phosphate = 1D-myo-inositol 3-phosphate. Its function is as follows. Key enzyme in myo-inositol biosynthesis pathway that catalyzes the conversion of glucose 6-phosphate to 1D-myo-inositol 3-phosphate in a NAD-dependent manner. The protein is Inositol-3-phosphate synthase (ino1) of Mycolicibacterium smegmatis (strain ATCC 700084 / mc(2)155) (Mycobacterium smegmatis).